The following is a 1024-amino-acid chain: Beta-galactosidase (1024 aa).

Positions 103 and 202 each coordinate substrate. Asp202 contributes to the Na(+) binding site. 3 residues coordinate Mg(2+): Glu417, His419, and Glu462. Substrate contacts are provided by residues Glu462 and 538–541; that span reads EYAH. The active-site Proton donor is the Glu462. Glu538 acts as the Nucleophile in catalysis. Asn598 provides a ligand contact to Mg(2+). Na(+) is bound by residues Phe602 and Asn605. Residues Asn605 and Trp1000 each contribute to the substrate site.

Belongs to the glycosyl hydrolase 2 family. Homotetramer. Requires Mg(2+) as cofactor. Na(+) serves as cofactor.

The catalysed reaction is Hydrolysis of terminal non-reducing beta-D-galactose residues in beta-D-galactosides.. The chain is Beta-galactosidase from Escherichia coli O17:K52:H18 (strain UMN026 / ExPEC).